We begin with the raw amino-acid sequence, 911 residues long: Protein transport protein SEC24-1 (911 aa).

The segment covering 108 to 123 has biased composition (low complexity); that stretch reads QPLPQQQQQQQQQQGP. The interval 108-130 is disordered; it reads QPLPQQQQQQQQQQGPAKPPKPM. Zn(2+)-binding residues include Cys-226, Cys-229, Cys-248, and Cys-251. Residues 226–251 are zinc finger-like; that stretch reads CRRCRSYMNPFVHFNQDGRRWKCNIC.

Belongs to the SEC23/SEC24 family. SEC24 subfamily. In terms of assembly, the COPII coat is composed of at least 5 proteins: the SEC23/24 complex, the SEC13/31 complex, and the protein SAR1. Golgi apparatus membrane; Peripheral membrane protein; Cytoplasmic side.

It localises to the cytoplasm. It is found in the cytoplasmic vesicle. Its subcellular location is the COPII-coated vesicle membrane. The protein resides in the endoplasmic reticulum membrane. The protein localises to the golgi apparatus membrane. Functionally, component of the coat protein complex II (COPII) which promotes the formation of transport vesicles from the endoplasmic reticulum (ER). The coat has two main functions, the physical deformation of the endoplasmic reticulum membrane into vesicles and the selection of cargo molecules. This Naumovozyma castellii (Yeast) protein is Protein transport protein SEC24-1 (SEC241).